The chain runs to 476 residues: Nitrosuccinate lyase (476 aa).

Fumarate-binding residues include Arg-137, Arg-140, and Arg-201. Residue Ser-302 is the Proton acceptor of the active site. Fumarate-binding residues include Lys-308 and Asn-310. The active-site Proton donor is Arg-341.

The protein belongs to the class-II fumarase/aspartase family. In terms of assembly, homotetramer.

The catalysed reaction is 2-nitrobutanedioate = fumarate + nitrite + H(+). The protein operates within antibiotic biosynthesis. Its function is as follows. Part of a gene cluster involved in the biosynthesis of cremeomycin, a light-sensitive o-diazoquinone with antibacterial and antiproliferative effects. Catalyzes the formation of nitrous acid from nitrosuccinic acid (2-nitrobutanedioate) by elimination of its nitro group. This Streptomyces cremeus protein is Nitrosuccinate lyase.